A 471-amino-acid chain; its full sequence is MMTAKAVDKIPVTLSGFVHQLSDNIYPVEDLAATSVTIFPNAELGSPFDQMNGVAGDGMINIDMTGEKRSLDLPYPSSFAPVSAPRNQTFTYMGKFSIDPQYPGASCYPEGIINIVSAGILQGVTSPASTTASSNVTSASPNPLATGPLGVCTMSQTQPDLDHLYSPPPPPPYSGCAGDLYQDPSAFLSAATTSTSSSLAYPPPPSYPSPKPATDPGLFPMIPDYPGFFPSQCQRDLHGTAGPDRKPFPCPLDSLRVPPPLTPLSTIRNFTLGGPSAGTTGPGASGGSEGPRLPGSSAAAAAAAYNPHHLPLRPILRPRKYPNRPSKTPVHERPYPCPAEGCDRRFSRSDELTRHIRIHTGHKPFQCRICMRNFSRSDHLTTHIRTHTGEKPFACDYCGRKFARSDERKRHTKIHLRQKERKSSAPSSSVPAASTASCTGGAQPGGPLCSSNSSTIGGGSLGPCSSRTRTP.

Over residues 127–143 (PASTTASSNVTSASPNP) the composition is skewed to low complexity. The tract at residues 127-177 (PASTTASSNVTSASPNPLATGPLGVCTMSQTQPDLDHLYSPPPPPPYSGCA) is disordered. An N6-acetyllysine; by EP300 modification is found at lysine 246. Disordered stretches follow at residues 273–301 (GGPS…AAAA) and 313–336 (RPIL…RPYP). Residues 280–289 (TGPGASGGSE) are compositionally biased toward gly residues. 3 C2H2-type zinc fingers span residues 335–359 (YPCP…IRIH), 365–387 (FQCR…IRTH), and 393–415 (FACD…TKIH). Residues 406 to 471 (DERKRHTKIH…GPCSSRTRTP (66 aa)) are disordered. The span at 410-420 (RHTKIHLRQKE) shows a compositional bias: basic residues. Positions 424–437 (SAPSSSVPAASTAS) are enriched in low complexity.

Belongs to the EGR C2H2-type zinc-finger protein family. Interacts with HCFC1. Interacts with WWP2. Interacts with UBC9. Interacts with CITED1. Interacts (via phosphorylated form) with SFN. Ubiquitinated by WWP2 leading to proteasomal degradation. In terms of processing, acetylated at Lys-246. May be deacetylated by HDAC6, HDAC10 or SIRT1.

It is found in the nucleus. It participates in protein modification; protein sumoylation. In terms of biological role, sequence-specific DNA-binding transcription factor. Plays a role in hindbrain segmentation by regulating the expression of a subset of homeobox containing genes and in Schwann cell myelination by regulating the expression of genes involved in the formation and maintenance of myelin. Binds to two EGR2-consensus sites EGR2A (5'-CTGTAGGAG-3') and EGR2B (5'-ATGTAGGTG-3') in the HOXB3 enhancer and promotes HOXB3 transcriptional activation. Binds to specific DNA sites located in the promoter region of HOXA4, HOXB2 and ERBB2. Regulates hindbrain segmentation by controlling the expression of Hox genes, such as HOXA4, HOXB3 and HOXB2, and thereby specifying odd and even rhombomeres. Promotes the expression of HOXB3 in the rhombomere r5 in the hindbrain. Regulates myelination in the peripheral nervous system after birth, possibly by regulating the expression of myelin proteins, such as MPZ, and by promoting the differentiation of Schwann cells. Involved in the development of the jaw openener musculature, probably by playing a role in its innervation through trigeminal motor neurons. May play a role in adipogenesis, possibly by regulating the expression of CEBPB. Its function is as follows. E3 SUMO-protein ligase helping SUMO1 conjugation to its coregulators NAB1 and NAB2, whose sumoylation down-regulates EGR2 transcriptional activity. The polypeptide is E3 SUMO-protein ligase EGR2 (EGR2) (Sus scrofa (Pig)).